We begin with the raw amino-acid sequence, 181 residues long: Transcription factor bHLH167 (181 aa).

The tract at residues 1–22 (MGRAREIGEGNSSSLREQRNLR) is disordered. Positions 14–63 (SLREQRNLREKDRRMRMKHLFSILSSHVSPTRKLPVPHLIDQATSYMIQL) constitute a bHLH domain.

The protein belongs to the bHLH protein family.

It localises to the nucleus. The protein is Transcription factor bHLH167 of Arabidopsis thaliana (Mouse-ear cress).